The sequence spans 343 residues: tRNA-specific 2-thiouridylase MnmA (343 aa).

Residues 7-14 and Met33 each bind ATP; that span reads ALSGGVDS. Cys87 functions as the Nucleophile in the catalytic mechanism. A disulfide bridge connects residues Cys87 and Cys184. Gly111 is an ATP binding site. Residues 135-137 are interaction with tRNA; sequence KDQ. Catalysis depends on Cys184, which acts as the Cysteine persulfide intermediate. An interaction with tRNA region spans residues 289–290; it reads RY.

Belongs to the MnmA/TRMU family.

It localises to the cytoplasm. The enzyme catalyses S-sulfanyl-L-cysteinyl-[protein] + uridine(34) in tRNA + AH2 + ATP = 2-thiouridine(34) in tRNA + L-cysteinyl-[protein] + A + AMP + diphosphate + H(+). In terms of biological role, catalyzes the 2-thiolation of uridine at the wobble position (U34) of tRNA, leading to the formation of s(2)U34. In Desulforudis audaxviator (strain MP104C), this protein is tRNA-specific 2-thiouridylase MnmA.